Reading from the N-terminus, the 59-residue chain is MNFTRIIFFLFVVVFATASGKPWNIFKEIERAVARTRDAVISAGPAVRTVAAATSVASG.

A signal peptide spans Met1–Gly20. A propeptide is located at residue Lys21. Residue Ser58 is modified to Serine amide.

This sequence belongs to the cecropin family.

Its subcellular location is the secreted. Functionally, has antibacterial activity against Gram-positive and Gram-negative bacteria. This is Antibacterial peptide enbocin from Bombyx mori (Silk moth).